Here is a 132-residue protein sequence, read N- to C-terminus: Large ribosomal subunit protein bL17 (132 aa).

The protein belongs to the bacterial ribosomal protein bL17 family. As to quaternary structure, part of the 50S ribosomal subunit. Contacts protein L32.

The polypeptide is Large ribosomal subunit protein bL17 (Variovorax paradoxus (strain S110)).